Here is an 808-residue protein sequence, read N- to C-terminus: Dynamin-like protein B (808 aa).

The 298-residue stretch at 43-340 folds into the Dynamin-type G domain; sequence FIETPEFVFI…TWRKYLDSVP (298 aa). Residues 53 to 60 form a G1 motif region; it reads GKDGNGKS. 53–60 contacts GTP; the sequence is GKDGNGKS. The segment at 79–80 is G2 motif; that stretch reads LR. Positions 150-153 are G3 motif; the sequence is EPPS. Residues 150 to 154 and 239 to 242 contribute to the GTP site; these read EPPSV and NKFH. The segment at 239 to 242 is G4 motif; sequence NKFH. The segment at 276–279 is G5 motif; the sequence is PSTA. Disordered regions lie at residues 536-565 and 665-695; these read SSFR…SSSI and SLNN…NSNH. Low complexity-rich tracts occupy residues 552–565 and 665–694; these read SSPS…SSSI and SLNN…NNSN.

Belongs to the TRAFAC class dynamin-like GTPase superfamily. Dynamin/Fzo/YdjA family.

The protein resides in the cytoplasm. It carries out the reaction GTP + H2O = GDP + phosphate + H(+). In terms of biological role, involved in cytokinesis. May hydrolyze GTP. This chain is Dynamin-like protein B (dlpB), found in Dictyostelium discoideum (Social amoeba).